Here is a 507-residue protein sequence, read N- to C-terminus: ATP synthase subunit alpha, chloroplastic (507 aa).

170–177 serves as a coordination point for ATP; sequence GDRQTGKT.

Belongs to the ATPase alpha/beta chains family. In terms of assembly, F-type ATPases have 2 components, CF(1) - the catalytic core - and CF(0) - the membrane proton channel. CF(1) has five subunits: alpha(3), beta(3), gamma(1), delta(1), epsilon(1). CF(0) has four main subunits: a, b, b' and c.

The protein localises to the plastid. The protein resides in the chloroplast thylakoid membrane. The enzyme catalyses ATP + H2O + 4 H(+)(in) = ADP + phosphate + 5 H(+)(out). Produces ATP from ADP in the presence of a proton gradient across the membrane. The alpha chain is a regulatory subunit. This Gossypium barbadense (Sea Island cotton) protein is ATP synthase subunit alpha, chloroplastic.